The primary structure comprises 565 residues: Periplasmic trehalase (565 aa).

The signal sequence occupies residues 1–30 (MKSPAPSRPQKMALIPACIFLCFAALSVQA). Substrate-binding positions include R152, 159–160 (WD), N196, 205–207 (RSQ), 277–279 (RPE), and G310. Active-site proton donor/acceptor residues include D312 and E496. E511 is a substrate binding site. Positions 540–565 (DNVPATHPTVKSATTQPSTKEAQPTP) are disordered. Residues 548–565 (TVKSATTQPSTKEAQPTP) are compositionally biased toward polar residues.

The protein belongs to the glycosyl hydrolase 37 family. Monomer.

It is found in the periplasm. It catalyses the reaction alpha,alpha-trehalose + H2O = alpha-D-glucose + beta-D-glucose. Provides the cells with the ability to utilize trehalose at high osmolarity by splitting it into glucose molecules that can subsequently be taken up by the phosphotransferase-mediated uptake system. This chain is Periplasmic trehalase, found in Shigella flexneri.